The following is a 254-amino-acid chain: Alcohol dehydrogenase 2 (254 aa).

10 to 33 contacts NAD(+); sequence FVAGLGGIGLDTSREIVKSGPKNL. Ser138 lines the substrate pocket. Tyr151 functions as the Proton acceptor in the catalytic mechanism.

This sequence belongs to the short-chain dehydrogenases/reductases (SDR) family. In terms of assembly, homodimer.

The enzyme catalyses a primary alcohol + NAD(+) = an aldehyde + NADH + H(+). The catalysed reaction is a secondary alcohol + NAD(+) = a ketone + NADH + H(+). This Drosophila hydei (Fruit fly) protein is Alcohol dehydrogenase 2 (Adh2).